The primary structure comprises 554 residues: MSVKQIAFGSKVGESLLNGVIKLANCVQVTLGPNGRNVLIEQSFGDPRVTKDGVTVAKHVELEDRYENLAAQLVKSVASKTADMVGDGTTTATVLARSIYSEAFKGTSAGMNSMELRAGIDHAVEIVVEKLKELSIPVKGDYQKISQVATVSANGDTEIGDMIAQAMEKVGSDGVITVEEAKSFKTELDVVPGMQFDRGYISPYFITRQDKGIAELERSYILLYDGKISSAQSLLPVLEKCAKESASLLIIAEDVEGEALRMLVVNKLRGVLKVAAVKSPGFGDRRKAMLGDIAVLTNGYVVSSEVGMRLEDVRIEDLGRADTIVIEKDNTTVIVNGPARSSVKERCDKIRSEIQEATSDYDKEKLQERLAKLSGGVAVIRVGGATEVELKERKDRVEDAMHATKAAVEEGIIPGGGTAFLRCVKPLEEVIKSAKVQERGRDFICGIDAVRKALSSPCYQIASNAGKEGGVVVAEVLKASDVNVGYDARHDQYVDMIKSGIIDPTKVARTALQNAGSVAGLLNTTEVIIAQVPEKEKPNMGGGMGGGMGGGMDF.

Residues 30–33 (TLGP), Lys-51, 87–91 (DGTTT), Gly-416, and Asp-503 contribute to the ATP site.

It belongs to the chaperonin (HSP60) family. Forms a cylinder of 14 subunits composed of two heptameric rings stacked back-to-back. Interacts with the co-chaperonin GroES.

The protein resides in the cytoplasm. It carries out the reaction ATP + H2O + a folded polypeptide = ADP + phosphate + an unfolded polypeptide.. Its function is as follows. Together with its co-chaperonin GroES, plays an essential role in assisting protein folding. The GroEL-GroES system forms a nano-cage that allows encapsulation of the non-native substrate proteins and provides a physical environment optimized to promote and accelerate protein folding. This chain is Chaperonin GroEL, found in Holospora obtusa.